Here is a 361-residue protein sequence, read N- to C-terminus: Histidinol-phosphate aminotransferase (361 aa).

Position 219 is an N6-(pyridoxal phosphate)lysine (Lys219).

The protein belongs to the class-II pyridoxal-phosphate-dependent aminotransferase family. Histidinol-phosphate aminotransferase subfamily. Homodimer. It depends on pyridoxal 5'-phosphate as a cofactor.

The catalysed reaction is L-histidinol phosphate + 2-oxoglutarate = 3-(imidazol-4-yl)-2-oxopropyl phosphate + L-glutamate. It participates in amino-acid biosynthesis; L-histidine biosynthesis; L-histidine from 5-phospho-alpha-D-ribose 1-diphosphate: step 7/9. This Acinetobacter baylyi (strain ATCC 33305 / BD413 / ADP1) protein is Histidinol-phosphate aminotransferase.